Consider the following 1401-residue polypeptide: MMSCWFSCAPKNRQAADWNKYDDRLMRAAERGDVEKVSSILAKKGVNPGKLDVEGRSAFHVVASKGNLECLNAILIHGVDITTSDTAGRNALHLAAKYGHALCLQKLLQYNCPTEHVDLQGRTALHDAAMADCPSSIQLLCDHGASVNAKDVDGRTPLVLATQMCRPTICQLLIDRGADINSRDKQNRTALMLGCEYGCKDAVEVLIKNGADVTLLDALGHDSSYYARIGDNLDILTLLKTASENSNKGRELWKKGPSLQQRNLSQMLDEVNTKSNQREHQNIQDLEIENEDLKERLRKIQQEQRILLDKVNGLQLQLNEEVMVADDLESEKEKLKSLLAAKEKQHEESLRTIEALKSRFKYFESDHLGSGSHFRKEDMLLKQGQMYMTDSQCTSTGMPVHMQSRSMLRPLELALPNQASYSENEILKKELEAMRTFCDSAKQDRLKLQNELAHKVAECKALALECERVKEDSDEQIKQLEDALKDVQKRMYESEGKVKQMQTHFLALKEHLTSDAATGNHRLMEELKDQLKDMKVKYEGASAEVGKLRNQIKQNEMLVEEFKRDEGKLMEENKRLQKELSMCELEREKRGRKLTEMEGQLKDLSAKLALSIPAEKFENMKSLLSNELNEKAKKLIDVEREYERSLNETRPLKRELENLKAKLAQHVKPEEHEQLKSRLEQKSGELGKRITELTSKNQTLQKEIEKVCLDNKLLTQQVNNLTTEMKNHYVPLKVSEEMKKSHDVIVDDLNKKLSDVTHKYTEKKLEMEKLLMENASLSKNVSRLETVFIPPERHEKEMMALKSNITELKKQLSELNKKCGEDQEKIYSLMSENNDLKKTMSHQYVPVKTHEEIKTALSSTLDKTNRELVDVKKKCEDINQEFVKIKDENEILKRNLENTQNQVKAEYISLREHEEKMSGLRKSMKKVQDNSAEILAKYKKSQEEIVTLHEEIAAQKRELDTIQECIKLKYAPIISLEECERKFKATEKELKEQLSQQTQKYNTSEEEAKKCKQENDKLKKEILTLQKDLKDKNVHIENSYETERALSRKTEELNRQLKDLLQKYTEAKKEKEKLVEENAKQTSEILAAQTLLQKQHVPLEQVESLKKSLSGTIETLKEELKTKQRCYEKEQQTVTQLRQMLENQKNSSVPLAEHLQVKEAFEKEVGIIKASLREKEEESQNKTEEVSKLQSEIQNTKQALKKLETREVVDLSKYKATKSDLETQISDLNEKLANLNRKYEEVCEEVLHAKKKELSAKDEKELLHFSIEQEIKDQQERCDKSLTTITELQRRIQESAKQIEAKDNKITELLNDVERLKQALNGLSQLTYGSGSPSKRQSQLIDSLQQQVRSLQQQLADADRQHQEVIAIYRTHLLSAAQGHMDEDVQAALLQIIQMRQGLVC.

6 ANK repeats span residues 25-53 (LMRA…KLDV), 54-83 (EGRS…DITT), 87-116 (AGRN…PTEH), 120-149 (QGRT…SVNA), 153-182 (DGRT…DINS), and 186-215 (QNRT…DVTL). Position 265 is a phosphoserine (Ser265). Coiled-coil stretches lie at residues 273–361 (TKSN…SRFK), 423–827 (ENEI…EKIY), and 856–1368 (ALSS…VIAI). Residue Lys1020 forms a Glycyl lysine isopeptide (Lys-Gly) (interchain with G-Cter in SUMO2) linkage.

Component of the apoptosome complex, composed of APAF1, pro-caspase-9 and UACA. In the complex, it probably interacts directly with APAF1. Interacts with LGALS3. Interacts with ARF6 and ACTB. Interacts with RAB39A. Highly expressed in muscle and heart, moderately in liver, kidney and pancreas, and weakly in placenta and lung.

The protein resides in the nucleus. It localises to the cytoplasm. Its subcellular location is the cytoskeleton. Regulates APAF1 expression and plays an important role in the regulation of stress-induced apoptosis. Promotes apoptosis by regulating three pathways, apoptosome up-regulation, LGALS3/galectin-3 down-regulation and NF-kappa-B inactivation. Regulates the redistribution of APAF1 into the nucleus after proapoptotic stress. Down-regulates the expression of LGALS3 by inhibiting NFKB1. Its function is as follows. Modulates isoactin dynamics to regulate the morphological alterations required for cell growth and motility. Interaction with ARF6 may modulate cell shape and motility after injury. May be involved in multiple neurite formation. In Bos taurus (Bovine), this protein is Uveal autoantigen with coiled-coil domains and ankyrin repeats protein (UACA).